The sequence spans 25 residues: Caerin-1.6 (25 aa).

Leucine amide is present on L25.

It belongs to the frog skin active peptide (FSAP) family. Caerin subfamily. Expressed by the skin dorsal glands.

It is found in the secreted. In terms of biological role, antimicrobial peptide. Adopts an alpha helical conformation which can disrupt bacterial membranes. Strongly inhibits the formation of NO by neuronal nitric oxide synthase (nNOS) at micromolar concentrations. Acts by a non-competitive mechanism, probably by binding to calcium/calmodulin and as a consequence blocking calmodulin attachment to nNOS. Does not show antimicrobial activity. The polypeptide is Caerin-1.6 (Ranoidea chloris (Red-eyed tree frog)).